The chain runs to 236 residues: Small ribosomal subunit protein uS3 (236 aa).

The region spanning 39 to 107 (IREFLTEELK…DTSLNIVEVR (69 aa)) is the KH type-2 domain. The interval 214-236 (ASERRAVEGDNQGSSSNRRRENA) is disordered.

It belongs to the universal ribosomal protein uS3 family. Part of the 30S ribosomal subunit. Forms a tight complex with proteins S10 and S14.

Functionally, binds the lower part of the 30S subunit head. Binds mRNA in the 70S ribosome, positioning it for translation. The sequence is that of Small ribosomal subunit protein uS3 from Brucella anthropi (strain ATCC 49188 / DSM 6882 / CCUG 24695 / JCM 21032 / LMG 3331 / NBRC 15819 / NCTC 12168 / Alc 37) (Ochrobactrum anthropi).